The primary structure comprises 133 residues: Stage III sporulation protein AD (133 aa).

3 helical membrane passes run 2–22, 29–49, and 108–128; these read QIDI…SLIV, FAFL…VDQI, and ILIL…ILGL.

It is found in the cell membrane. The sequence is that of Stage III sporulation protein AD (spoIIIAD) from Bacillus subtilis (strain 168).